We begin with the raw amino-acid sequence, 426 residues long: Limonoid 21-O-acetyltransferse (426 aa).

Active-site proton acceptor residues include His152 and Asp365.

Belongs to the plant acyltransferase family. Monomer. In terms of tissue distribution, expressed in maturing fruits and in juice vesicles.

It catalyses the reaction isomeliandiol + acetyl-CoA = 21-O-acetyl-isomeliandiol + CoA. It functions in the pathway secondary metabolite biosynthesis; terpenoid biosynthesis. Acetyltransferase involved in the biosynthesis of limonoids triterpene natural products such as limonin, a compound with insecticidal activity responsible for the bitter taste in citrus. Catalyzes the formation of 21-O-acetyl-isomeliandiol from isomeliandiol. The chain is Limonoid 21-O-acetyltransferse from Citrus sinensis (Sweet orange).